A 570-amino-acid polypeptide reads, in one-letter code: Dihydroxy-acid dehydratase (570 aa).

Residue C61 coordinates [2Fe-2S] cluster. D94 is a binding site for Mg(2+). C135 lines the [2Fe-2S] cluster pocket. The Mg(2+) site is built by D136 and K137. N6-carboxylysine is present on K137. C207 is a [2Fe-2S] cluster binding site. E459 serves as a coordination point for Mg(2+). Residue S485 is the Proton acceptor of the active site.

This sequence belongs to the IlvD/Edd family. As to quaternary structure, homodimer. It depends on [2Fe-2S] cluster as a cofactor. The cofactor is Mg(2+).

The catalysed reaction is (2R)-2,3-dihydroxy-3-methylbutanoate = 3-methyl-2-oxobutanoate + H2O. The enzyme catalyses (2R,3R)-2,3-dihydroxy-3-methylpentanoate = (S)-3-methyl-2-oxopentanoate + H2O. It functions in the pathway amino-acid biosynthesis; L-isoleucine biosynthesis; L-isoleucine from 2-oxobutanoate: step 3/4. The protein operates within amino-acid biosynthesis; L-valine biosynthesis; L-valine from pyruvate: step 3/4. Functions in the biosynthesis of branched-chain amino acids. Catalyzes the dehydration of (2R,3R)-2,3-dihydroxy-3-methylpentanoate (2,3-dihydroxy-3-methylvalerate) into 2-oxo-3-methylpentanoate (2-oxo-3-methylvalerate) and of (2R)-2,3-dihydroxy-3-methylbutanoate (2,3-dihydroxyisovalerate) into 2-oxo-3-methylbutanoate (2-oxoisovalerate), the penultimate precursor to L-isoleucine and L-valine, respectively. The polypeptide is Dihydroxy-acid dehydratase (Lactococcus lactis subsp. cremoris (strain SK11)).